The sequence spans 420 residues: Exodeoxyribonuclease 7 large subunit (420 aa).

It belongs to the XseA family. Heterooligomer composed of large and small subunits.

It is found in the cytoplasm. It carries out the reaction Exonucleolytic cleavage in either 5'- to 3'- or 3'- to 5'-direction to yield nucleoside 5'-phosphates.. Its function is as follows. Bidirectionally degrades single-stranded DNA into large acid-insoluble oligonucleotides, which are then degraded further into small acid-soluble oligonucleotides. This is Exodeoxyribonuclease 7 large subunit from Helicobacter pylori (strain HPAG1).